We begin with the raw amino-acid sequence, 209 residues long: Ribonuclease HII (209 aa).

In terms of domain architecture, RNase H type-2 spans glycine 7–histidine 198. The a divalent metal cation site is built by aspartate 13, glutamate 14, and aspartate 107.

Belongs to the RNase HII family. Mn(2+) is required as a cofactor. The cofactor is Mg(2+).

The protein localises to the cytoplasm. It carries out the reaction Endonucleolytic cleavage to 5'-phosphomonoester.. Endonuclease that specifically degrades the RNA of RNA-DNA hybrids. The polypeptide is Ribonuclease HII (Corynebacterium glutamicum (strain R)).